The primary structure comprises 237 residues: UPF0758 protein Aave_3773 (237 aa).

The 123-residue stretch at 115-237 (LFHSPRAVRD…SLSMAEEGLI (123 aa)) folds into the MPN domain. Histidine 186, histidine 188, and aspartate 199 together coordinate Zn(2+). The short motif at 186–199 (HNHPSGQVQPSRAD) is the JAMM motif element.

Belongs to the UPF0758 family.

In Paracidovorax citrulli (strain AAC00-1) (Acidovorax citrulli), this protein is UPF0758 protein Aave_3773.